The chain runs to 115 residues: Large ribosomal subunit protein bL19 (115 aa).

Belongs to the bacterial ribosomal protein bL19 family.

In terms of biological role, this protein is located at the 30S-50S ribosomal subunit interface and may play a role in the structure and function of the aminoacyl-tRNA binding site. The polypeptide is Large ribosomal subunit protein bL19 (Streptococcus gordonii (strain Challis / ATCC 35105 / BCRC 15272 / CH1 / DL1 / V288)).